The primary structure comprises 308 residues: Cell division protein ZipA (308 aa).

At methionine 1–arginine 5 the chain is on the periplasmic side. Residues leucine 6 to threonine 26 form a helical membrane-spanning segment. The Cytoplasmic segment spans residues serine 27–asparagine 308. The segment at phenylalanine 43–phenylalanine 90 is disordered. Positions glutamate 59–proline 82 are enriched in basic and acidic residues.

The protein belongs to the ZipA family. Interacts with FtsZ via their C-terminal domains.

The protein localises to the cell inner membrane. In terms of biological role, essential cell division protein that stabilizes the FtsZ protofilaments by cross-linking them and that serves as a cytoplasmic membrane anchor for the Z ring. Also required for the recruitment to the septal ring of downstream cell division proteins. This Aliivibrio salmonicida (strain LFI1238) (Vibrio salmonicida (strain LFI1238)) protein is Cell division protein ZipA.